The chain runs to 767 residues: 5-methyltetrahydropteroyltriglutamate--homocysteine methyltransferase (767 aa).

5-methyltetrahydropteroyltri-L-glutamate contacts are provided by residues R17 to K20 and K117. L-homocysteine contacts are provided by residues I441–S443 and E494. L-methionine-binding positions include I441–S443 and E494. 5-methyltetrahydropteroyltri-L-glutamate is bound by residues R525–C526 and W571. L-homocysteine is bound at residue D609. D609 is an L-methionine binding site. Position 615 (E615) interacts with 5-methyltetrahydropteroyltri-L-glutamate. Zn(2+)-binding residues include H652, C654, and E676. H705 acts as the Proton donor in catalysis. C737 is a binding site for Zn(2+).

Belongs to the vitamin-B12 independent methionine synthase family. Zn(2+) is required as a cofactor.

It catalyses the reaction 5-methyltetrahydropteroyltri-L-glutamate + L-homocysteine = tetrahydropteroyltri-L-glutamate + L-methionine. It participates in amino-acid biosynthesis; L-methionine biosynthesis via de novo pathway; L-methionine from L-homocysteine (MetE route): step 1/1. In terms of biological role, catalyzes the transfer of a methyl group from 5-methyltetrahydrofolate to homocysteine resulting in methionine formation. This Bifidobacterium longum (strain NCC 2705) protein is 5-methyltetrahydropteroyltriglutamate--homocysteine methyltransferase.